The sequence spans 610 residues: Prolactin receptor (610 aa).

The N-terminal stretch at 1-19 is a signal peptide; the sequence is MPSALAFVLLVLNISLLKG. Residues 20-229 are Extracellular-facing; it reads QSPPGKPEIH…EMPNDFTLKD (210 aa). 2 consecutive Fibronectin type-III domains span residues 22 to 122 and 124 to 224; these read PPGK…IVEP and PPRN…MPND. A disulfide bridge links Cys-31 with Cys-41. The N-linked (GlcNAc...) asparagine glycan is linked to Asn-54. Residues Cys-70 and Cys-81 are joined by a disulfide bond. 2 N-linked (GlcNAc...) asparagine glycosylation sites follow: Asn-99 and Asn-127. Positions 206 and 207 each coordinate Zn(2+). Residues 210–214 carry the WSXWS motif motif; that stretch reads WSRWS. A helical transmembrane segment spans residues 230–253; that stretch reads TTVWIIVAILSAVICLIMVWAVAL. The Cytoplasmic segment spans residues 254–610; the sequence is KGYSMMTCIF…DPTCFMHSFH (357 aa). The Box 1 motif motif lies at 262–270; that stretch reads IFPPVPGPK. 3 disordered regions span residues 317–355, 458–482, and 564–584; these read DERL…HSLL, TGEE…TPWP, and AKKA…ASFT. The span at 318-327 shows a compositional bias: basic and acidic residues; that stretch reads ERLMPSHSKE. Positions 345 to 354 are enriched in low complexity; the sequence is GHGSYDSHSL.

Belongs to the type I cytokine receptor family. Type 1 subfamily. As to quaternary structure, interacts with SMARCA1. Interacts with NEK3 and VAV2 and this interaction is prolactin-dependent.

The protein localises to the membrane. Functionally, this is a receptor for the anterior pituitary hormone prolactin. The sequence is that of Prolactin receptor (Prlr) from Rattus norvegicus (Rat).